Consider the following 428-residue polypeptide: Patatin-like protein 3 (428 aa).

The PNPLA domain occupies 38-252 (LSIDGGGIRG…AANNPTLCAI (215 aa)). The short motif at 42–47 (GGGIRG) is the GXGXXG element. Positions 80 to 84 (GTSTG) match the GXSXG motif. S82 (nucleophile) is an active-site residue. D239 (proton acceptor) is an active-site residue. The DGA/G motif lies at 239-241 (DGG). Position 423 is a phosphoserine (S423).

The protein belongs to the patatin family. In terms of tissue distribution, expressed specifically in the stigma, ovary and funiculus of the ovary.

It is found in the cytoplasm. Functionally, possesses non-specific lipolytic acyl hydrolase (LAH) activity. Catalyzes the hydrolysis of the neutral lipids monogalactosyldiacylglycerol (MGDG), digalactosyldiacylglycerol (DGDG) and phosphatidylglycerol (PG), and less efficiently the polar lipids phosphatidylcholine (PC) and phosphatidylinositol (PI), but not the storage lipid triacylglycerol (TAG). May play a role in root development. This is Patatin-like protein 3 (PLP3) from Arabidopsis thaliana (Mouse-ear cress).